Here is a 448-residue protein sequence, read N- to C-terminus: Pre-mRNA-splicing factor SAD1 (448 aa).

Position 1 is an N-acetylmethionine (M1). A UBP-type; degenerate zinc finger spans residues 27 to 124 (PNYAYLETVV…NSIKFAAYPT (98 aa)). Residues C60, C63, H79, and H85 each coordinate Zn(2+). The USP domain maps to 150–447 (IGFTNAATYD…ETFIQVWEKQ (298 aa)).

In terms of assembly, component of the 45S U1.U2.U4/U6.U5 penta-snRNP particle, a subcomplex of the spliceosome.

The protein localises to the nucleus. Functionally, promotes the assembly of newly synthesized U4 snRNA into the U4/U6 snRNP particle. Required for splicing of pre-mRNA. This chain is Pre-mRNA-splicing factor SAD1 (SAD1), found in Saccharomyces cerevisiae (strain ATCC 204508 / S288c) (Baker's yeast).